A 294-amino-acid polypeptide reads, in one-letter code: Elongation factor Ts (294 aa).

An involved in Mg(2+) ion dislocation from EF-Tu region spans residues 82–85; the sequence is TDFV.

Belongs to the EF-Ts family.

The protein resides in the cytoplasm. Functionally, associates with the EF-Tu.GDP complex and induces the exchange of GDP to GTP. It remains bound to the aminoacyl-tRNA.EF-Tu.GTP complex up to the GTP hydrolysis stage on the ribosome. This chain is Elongation factor Ts, found in Psychrobacter arcticus (strain DSM 17307 / VKM B-2377 / 273-4).